We begin with the raw amino-acid sequence, 858 residues long: Neurofilament medium polypeptide (858 aa).

Ser2 bears the N-acetylserine mark. The interval 2–99 (SYTMEPLGNP…KLSRSNEKEQ (98 aa)) is head. The tract at residues 22 to 57 (ATYSRASASPSSGFRSQSWSRGSGSTVSSSYKRTNL) is disordered. Positions 30–54 (SPSSGFRSQSWSRGSGSTVSSSYKR) are enriched in low complexity. O-linked (GlcNAc) threonine glycosylation is present at Thr47. In terms of domain architecture, IF rod spans 96–407 (EKEQLQGLND…KLLEGEETRF (312 aa)). Residues 100 to 131 (LQGLNDRFAGYIEKVHYLEQQNKEIEAELAAL) form a coil 1A region. Residues 132 to 144 (RQKHAGRAQLGDA) form a linker 1 region. A coil 1B region spans residues 145-243 (YEQELRELRG…EEEVAELLAQ (99 aa)). The interval 244–260 (LQASHATVERKDYLKTD) is linker 12. Residues 261–282 (LTTALKEIRAQLECQSDHNMHQ) form a coil 2A region. A linker 2 region spans residues 283-286 (AEEW). The interval 287-407 (FKCRYAKLTE…KLLEGEETRF (121 aa)) is coil 2B. The interval 408–858 (SAFSGSITGP…SHAVVKEIKE (451 aa)) is tail. The O-linked (GlcNAc) threonine glycan is linked to Thr427. The tract at residues 478–788 (AAKAQEEEQE…VVTNGLDVSP (311 aa)) is disordered. Acidic residues-rich tracts occupy residues 484–500 (EEQE…EEEA) and 509–524 (AAEE…EEEE). Positions 525 to 541 (AAKSDAAEEGGSKKEEI) are enriched in basic and acidic residues. Residues 542-555 (EEKEEGEEAEEEEA) show a composition bias toward acidic residues. Over residues 556 to 572 (EAKGKAEEAGAKVEKVK) the composition is skewed to basic and acidic residues. Residues 576-586 (AKSPPKSPPKS) show a composition bias toward pro residues. A compositionally biased stretch (low complexity) spans 590–601 (EQAKAVQKAAAE). A compositionally biased stretch (basic and acidic residues) spans 602–623 (VGKDQKAEKAAEKAAKEEKAAS). The segment covering 624–637 (PEKPATPKVTSPEK) has biased composition (low complexity). Composition is skewed to basic and acidic residues over residues 651–664 (ITPE…KPTT) and 675–727 (ASPE…KAVV). Low complexity predominate over residues 728 to 743 (EESITVTKVTKVTAEV). The segment covering 744–771 (EVSKEARKEDIAVNGEVEEKKDEAKEKE) has biased composition (basic and acidic residues).

The protein belongs to the intermediate filament family. There are a number of repeats of the tripeptide K-S-P, NFM is phosphorylated on a number of the serines in this motif. It is thought that phosphorylation of NFM results in the formation of interfilament cross bridges that are important in the maintenance of axonal caliber. In terms of processing, phosphorylation seems to play a major role in the functioning of the larger neurofilament polypeptides (NF-M and NF-H), the levels of phosphorylation being altered developmentally and coincident with a change in the neurofilament function.

It is found in the cytoplasm. The protein localises to the cytoskeleton. It localises to the cell projection. The protein resides in the axon. In terms of biological role, neurofilaments usually contain three intermediate filament proteins: NEFL, NEFM, and NEFH which are involved in the maintenance of neuronal caliber. May additionally cooperate with other neuronal intermediate filament proteins to form neuronal filamentous networks. This Gallus gallus (Chicken) protein is Neurofilament medium polypeptide (NEFM).